The primary structure comprises 479 residues: Sulfate adenylyltransferase subunit 1 (479 aa).

One can recognise a tr-type G domain in the interval 25–239 (KSLLRFLTCG…EVLETVDIQR (215 aa)). The segment at 34 to 41 (GSVDDGKS) is G1. 34 to 41 (GSVDDGKS) provides a ligand contact to GTP. Residues 92 to 96 (GITID) form a G2 region. Residues 113 to 116 (DTPG) form a G3 region. Residues 113 to 117 (DTPGH) and 168 to 171 (NKMD) contribute to the GTP site. Positions 168–171 (NKMD) are G4. Residues 206-208 (SAL) form a G5 region.

The protein belongs to the TRAFAC class translation factor GTPase superfamily. Classic translation factor GTPase family. CysN/NodQ subfamily. In terms of assembly, heterodimer composed of CysD, the smaller subunit, and CysN.

The enzyme catalyses sulfate + ATP + H(+) = adenosine 5'-phosphosulfate + diphosphate. It functions in the pathway sulfur metabolism; hydrogen sulfide biosynthesis; sulfite from sulfate: step 1/3. Its function is as follows. With CysD forms the ATP sulfurylase (ATPS) that catalyzes the adenylation of sulfate producing adenosine 5'-phosphosulfate (APS) and diphosphate, the first enzymatic step in sulfur assimilation pathway. APS synthesis involves the formation of a high-energy phosphoric-sulfuric acid anhydride bond driven by GTP hydrolysis by CysN coupled to ATP hydrolysis by CysD. This chain is Sulfate adenylyltransferase subunit 1, found in Salmonella arizonae (strain ATCC BAA-731 / CDC346-86 / RSK2980).